We begin with the raw amino-acid sequence, 654 residues long: RNA polymerase I-specific transcription initiation factor tif-1A (654 aa).

The segment at 1-37 (MKRSTANAPKLSPKHESESDPKKVKLEEEAKPTVNQA) is disordered. Positions 13–31 (PKHESESDPKKVKLEEEAK) are enriched in basic and acidic residues.

The protein belongs to the RRN3 family.

It is found in the nucleus. It localises to the nucleolus. Its function is as follows. Required for efficient transcription initiation by RNA polymerase I (Pol I). In Caenorhabditis elegans, this protein is RNA polymerase I-specific transcription initiation factor tif-1A.